Reading from the N-terminus, the 298-residue chain is Transcription factor RHD6 (298 aa).

Disordered stretches follow at residues 1-58 and 157-213; these read MALV…SDHQ and TGSR…AKNR. The span at 15–27 shows a compositional bias: low complexity; it reads SKQNSSSSEDLSS. Polar residues-rich tracts occupy residues 157-168 and 177-190; these read TGSRNESLSPKS and GEST…SSGV. Low complexity predominate over residues 191–205; it reads TGKTKPKPTTSPKDP. The segment at 201 to 214 is basic motif; that stretch reads SPKDPQSLAAKNRR. The bHLH domain occupies 201–250; that stretch reads SPKDPQSLAAKNRRERISERLKILQELVPNGTKVDLVTMLEKAISYVKFL. Residues 215–250 are helix-loop-helix motif; sequence ERISERLKILQELVPNGTKVDLVTMLEKAISYVKFL.

Homodimer. Forms heterodimers with RSL1. Interacts with TIFY10B/JAZ2, TIFY6A/JAZ4, TIFY5A/JAZ8, TIFY7/JAZ9 and TIFY9/JAZ10. As to expression, expressed constitutively in flowers. Expressed in root epidermal hair cells.

It localises to the nucleus. Functionally, transcription factor that is specifically required for the development of root hairs. Acts with RSL1 to positively regulate root hair development. Acts downstream of genes that regulate epidermal pattern formation, such as GL2. Targets directly RSL4, another transcription factor involved in the regulation of root hair elongation. Acts with RSL1 as transcription factor that integrates a jasmonate (JA) signaling pathway that stimulates root hair growth. The protein is Transcription factor RHD6 of Arabidopsis thaliana (Mouse-ear cress).